The following is a 557-amino-acid chain: MKAILRASRIGRVILRYRLDALLEGTPAERWLRLAKPFVPRASAEIAAQSRGARLRLALQELGPIFVKFGQILSTRRDLIPADVAEELTLLQDRVKPFDGQAARLIVEAALGLPVSVAFASFDTVPLASASIAQVHAATLPPDANGVRREVVVKVLRPDIERQIDADIALLHSLATLVERTHPRADKIRPREVVAEIEGTLAAELDLQREGANASVLRRFWEGSDDLYVPEVIWSHTAERALTLERVYGIPSDDIAKLDAAGIDRKALAAKGVRVFYTQVFRDNFFHADAHAGNIWVDSDPERRLNPRFIALDFGIMGQLSQEDQYYLAENFMAIFHKDYRRMAELHVEAGWMPSNVRIDELEAAARSVCEPYFTRPLSEISLAQVLIKLFRVAQRYELTLQPQLILLQKTLLNIEGVGRQLDPKLDIWAVARPVLERILRERYSPRRVLRELGKRLPEIMTHAPDMPRLVHSWLKQQVEGRHQIDIRSPELLALDLSLRKLQTRVVTAITGSGLLVVAAVLYGLHPDGWYLGTVPVWSWISGGAGSAALLVAWLRR.

Residues 121-509 form the Protein kinase domain; the sequence is SFDTVPLASA…RKLQTRVVTA (389 aa). ATP-binding positions include 127–135 and lysine 154; that span reads LASASIAQV. Aspartate 289 (proton acceptor) is an active-site residue. A run of 2 helical transmembrane segments spans residues 506-526 and 535-555; these read VVTA…YGLH and VPVW…VAWL.

This sequence belongs to the ABC1 family. UbiB subfamily.

The protein localises to the cell inner membrane. Its pathway is cofactor biosynthesis; ubiquinone biosynthesis [regulation]. Is probably a protein kinase regulator of UbiI activity which is involved in aerobic coenzyme Q (ubiquinone) biosynthesis. The polypeptide is Probable protein kinase UbiB (Xanthomonas euvesicatoria pv. vesicatoria (strain 85-10) (Xanthomonas campestris pv. vesicatoria)).